The primary structure comprises 123 residues: Putative membrane protein insertion efficiency factor (123 aa).

The tract at residues M1–D23 is disordered.

The protein belongs to the UPF0161 family.

It localises to the cell inner membrane. In terms of biological role, could be involved in insertion of integral membrane proteins into the membrane. The chain is Putative membrane protein insertion efficiency factor from Brucella abortus (strain 2308).